Reading from the N-terminus, the 532-residue chain is BEL1-like homeodomain protein 6 (532 aa).

The tract at residues 144 to 160 (SKYLKAAQQLLDEAVNV) is SR/KY domain. Residues 170–203 (EGDKNNENPQEPNQSTQDSSTNPPADISQSERQE) form a disordered region. Over residues 176–197 (ENPQEPNQSTQDSSTNPPADIS) the composition is skewed to polar residues. Residues 200–271 (ERQEMQSKLT…SLRDAISGQI (72 aa)) are BELL domain. A DNA-binding region (homeobox) is located at residues 314–376 (AWRPQRGLPE…NARVRLWKPM (63 aa)). The segment at 385 to 434 (FTENDSNSSSENTPKMSEIGPVAADDEDRAREFSQDQTKPDHGHGYGEET) is disordered. A compositionally biased stretch (basic and acidic residues) spans 412–434 (DRAREFSQDQTKPDHGHGYGEET).

This sequence belongs to the TALE/BELL homeobox family. As to quaternary structure, may form heterodimeric complexes with TALE/KNOX proteins. Interacts with OFP2, OFP4, and OFP5.

It localises to the nucleus. In Arabidopsis thaliana (Mouse-ear cress), this protein is BEL1-like homeodomain protein 6 (BLH6).